Reading from the N-terminus, the 579-residue chain is Insulin-like growth factor 2 mRNA-binding protein 3 (579 aa).

RRM domains follow at residues 2-75 (NKLY…HSVP) and 81-156 (RKLQ…YIPD). The segment at 160–192 (AQQNPLQQPRGRRGLGQRGSSRQGSPGSVSKQK) is disordered. Residues 177–187 (RGSSRQGSPGS) show a composition bias toward low complexity. Residue Ser184 is modified to Phosphoserine. KH domains lie at 195 to 260 (DLPL…CKSI), 276 to 343 (EIPL…EEEI), and 405 to 470 (TETV…QGRI). Glycyl lysine isopeptide (Lys-Gly) (interchain with G-Cter in SUMO2) cross-links involve residues Lys450 and Lys475. The region spanning 487 to 553 (KLEAHIRVPS…YACQVAQRKI (67 aa)) is the KH 4 domain. Phosphothreonine is present on Thr528.

Belongs to the RRM IMP/VICKZ family. Can form homooligomers and heterooligomers with IGF2BP1 and IGF2BP3 in an RNA-dependent manner. Interacts with IGF2BP1. Interacts with ELAVL1, DHX9, HNRNPU, MATR3 and PABPC1. As to expression, expressed in fetal liver, fetal lung, fetal kidney, fetal thymus, fetal placenta, fetal follicles of ovary and gonocytes of testis, growing oocytes, spermatogonia and semen (at protein level). Expressed in cervix adenocarcinoma, in testicular, pancreatic and renal-cell carcinomas (at protein level). Expressed ubiquitously during fetal development at 8 and 14 weeks of gestation. Expressed in ovary, testis, brain, placenta, pancreatic cancer tissues and pancreatic cancer cell lines.

The protein resides in the nucleus. It is found in the cytoplasm. Its subcellular location is the P-body. It localises to the stress granule. In terms of biological role, RNA-binding factor that may recruit target transcripts to cytoplasmic protein-RNA complexes (mRNPs). This transcript 'caging' into mRNPs allows mRNA transport and transient storage. It also modulates the rate and location at which target transcripts encounter the translational apparatus and shields them from endonuclease attacks or microRNA-mediated degradation. Preferentially binds to N6-methyladenosine (m6A)-containing mRNAs and increases their stability. Binds to the 3'-UTR of CD44 mRNA and stabilizes it, hence promotes cell adhesion and invadopodia formation in cancer cells. Binds to beta-actin/ACTB and MYC transcripts. Increases MYC mRNA stability by binding to the coding region instability determinant (CRD) and binding is enhanced by m6A-modification of the CRD. Binds to the 5'-UTR of the insulin-like growth factor 2 (IGF2) mRNAs. This Homo sapiens (Human) protein is Insulin-like growth factor 2 mRNA-binding protein 3 (IGF2BP3).